The chain runs to 239 residues: Aspartate/glutamate leucyltransferase (239 aa).

Belongs to the R-transferase family. Bpt subfamily.

Its subcellular location is the cytoplasm. It catalyses the reaction N-terminal L-glutamyl-[protein] + L-leucyl-tRNA(Leu) = N-terminal L-leucyl-L-glutamyl-[protein] + tRNA(Leu) + H(+). It carries out the reaction N-terminal L-aspartyl-[protein] + L-leucyl-tRNA(Leu) = N-terminal L-leucyl-L-aspartyl-[protein] + tRNA(Leu) + H(+). Functions in the N-end rule pathway of protein degradation where it conjugates Leu from its aminoacyl-tRNA to the N-termini of proteins containing an N-terminal aspartate or glutamate. The protein is Aspartate/glutamate leucyltransferase of Alkalilimnicola ehrlichii (strain ATCC BAA-1101 / DSM 17681 / MLHE-1).